Reading from the N-terminus, the 1119-residue chain is Translation initiation factor IF-2 (1119 aa).

Disordered regions lie at residues 64 to 463 (SIKK…TSGY) and 477 to 507 (RPKK…RQRQ). The span at 70–102 (IKKDNYKQNKEDKSSLISSVEEKPFKDNPEKKP) shows a compositional bias: basic and acidic residues. Composition is skewed to polar residues over residues 116-153 (IISN…QNLN) and 182-212 (KNTT…KPDQ). A compositionally biased stretch (low complexity) spans 213–224 (NSSKSKTKNINN). 4 stretches are compositionally biased toward polar residues: residues 242-257 (NKQN…QTVP), 281-297 (FNRQ…SSNK), 319-328 (FNRQVNTNRS), and 375-387 (QVIN…NSET). The segment covering 421 to 435 (GKTDWDDSAKLEALR) has biased composition (basic and acidic residues). A compositionally biased stretch (basic residues) spans 493-507 (KQFKKKKKETTRQRQ). The region spanning 610–782 (KRPPVITVMG…ILLVSEVEDL (173 aa)) is the tr-type G domain. Positions 619-626 (GHVDHGKT) are G1. 619–626 (GHVDHGKT) serves as a coordination point for GTP. Residues 644 to 648 (GITQH) form a G2 region. A G3 region spans residues 669-672 (DTPG). GTP contacts are provided by residues 669–673 (DTPGH) and 723–726 (NKID). Residues 723-726 (NKID) form a G4 region. The G5 stretch occupies residues 759–761 (SAI).

Belongs to the TRAFAC class translation factor GTPase superfamily. Classic translation factor GTPase family. IF-2 subfamily.

Its subcellular location is the cytoplasm. In terms of biological role, one of the essential components for the initiation of protein synthesis. Protects formylmethionyl-tRNA from spontaneous hydrolysis and promotes its binding to the 30S ribosomal subunits. Also involved in the hydrolysis of GTP during the formation of the 70S ribosomal complex. The sequence is that of Translation initiation factor IF-2 from Prochlorococcus marinus (strain MIT 9215).